The sequence spans 373 residues: MRLLFRFLTLVAVLAMSLADVAPAWALTSRIKDIASLQAGRDNQLIGYGLIVGLQGTGDGFRSSPFTEQSMRAMLQNLGISTQGGQSNAKNTAAVMVTANLPPFASPGSRIDVTVSSLGDATSLRGGTLVMTSLSGADGQIYAVAQGAVIVSGFQAQGQAATVTEGVTTAGRVPGGAIIERELPSRFKDSVNLVLQLRNPDFSTAIRIADIVNGYASARFGGPVAEAKDSQEVVIQKPRTADLTRLMADVENLIVETDTPAKVVINERTGTIVIGSDVRVSPVAVSYGTLTVQVTETPQIIQPEPFSRGRTAVQPQTDIAAEQTGGRVAIIDGPDLRTLVAGLNNIGVKPDGIIAILQGIKSAGALQAELVLQ.

The N-terminal stretch at 1-26 is a signal peptide; that stretch reads MRLLFRFLTLVAVLAMSLADVAPAWA.

The protein belongs to the FlgI family. As to quaternary structure, the basal body constitutes a major portion of the flagellar organelle and consists of four rings (L,P,S, and M) mounted on a central rod.

The protein resides in the periplasm. Its subcellular location is the bacterial flagellum basal body. Assembles around the rod to form the L-ring and probably protects the motor/basal body from shearing forces during rotation. In Rhizobium etli (strain CIAT 652), this protein is Flagellar P-ring protein.